An 863-amino-acid chain; its full sequence is Eukaryotic translation initiation factor 3 subunit C (863 aa).

Positions 1–92 are disordered; it reads MSRFFRGGDD…VKSAKDKRFD (92 aa). Over residues 16 to 53 the composition is skewed to acidic residues; sequence SSDEEELYSTSEEEEEEDQDQEESSEEEDEEESSDEDE. Over residues 79 to 92 the composition is skewed to basic and acidic residues; sequence GATKVKSAKDKRFD. Residues 604–778 form the PCI domain; the sequence is FHMHINLELL…KTVIFRKGVE (175 aa). Residues 808–863 form a disordered region; sequence TQGSANAFSRKDGRQGGQRGGGQRSGRGGARAGGNAQRQAGGTQFTGGALGAAVRG. Gly residues predominate over residues 822–839; the sequence is QGGQRGGGQRSGRGGARA. The span at 840-850 shows a compositional bias: low complexity; sequence GGNAQRQAGGT.

It belongs to the eIF-3 subunit C family. As to quaternary structure, component of the eukaryotic translation initiation factor 3 (eIF-3) complex.

The protein localises to the cytoplasm. Component of the eukaryotic translation initiation factor 3 (eIF-3) complex, which is involved in protein synthesis of a specialized repertoire of mRNAs and, together with other initiation factors, stimulates binding of mRNA and methionyl-tRNAi to the 40S ribosome. The eIF-3 complex specifically targets and initiates translation of a subset of mRNAs involved in cell proliferation. The chain is Eukaryotic translation initiation factor 3 subunit C from Chaetomium globosum (strain ATCC 6205 / CBS 148.51 / DSM 1962 / NBRC 6347 / NRRL 1970) (Soil fungus).